The following is a 301-amino-acid chain: Aspartate carbamoyltransferase catalytic subunit (301 aa).

The carbamoyl phosphate site is built by Arg54 and Thr55. Lys82 is an L-aspartate binding site. Arg104, His132, and Gln135 together coordinate carbamoyl phosphate. L-aspartate is bound by residues Arg165 and Arg217. Positions 257 and 258 each coordinate carbamoyl phosphate.

It belongs to the aspartate/ornithine carbamoyltransferase superfamily. ATCase family. As to quaternary structure, heterododecamer (2C3:3R2) of six catalytic PyrB chains organized as two trimers (C3), and six regulatory PyrI chains organized as three dimers (R2).

It carries out the reaction carbamoyl phosphate + L-aspartate = N-carbamoyl-L-aspartate + phosphate + H(+). It participates in pyrimidine metabolism; UMP biosynthesis via de novo pathway; (S)-dihydroorotate from bicarbonate: step 2/3. Functionally, catalyzes the condensation of carbamoyl phosphate and aspartate to form carbamoyl aspartate and inorganic phosphate, the committed step in the de novo pyrimidine nucleotide biosynthesis pathway. This Thermus aquaticus protein is Aspartate carbamoyltransferase catalytic subunit.